Here is a 285-residue protein sequence, read N- to C-terminus: DNA repair protein RecO (285 aa).

This sequence belongs to the RecO family.

Involved in DNA repair and RecF pathway recombination. In Synechococcus sp. (strain JA-2-3B'a(2-13)) (Cyanobacteria bacterium Yellowstone B-Prime), this protein is DNA repair protein RecO.